The chain runs to 311 residues: Lipoyl synthase (311 aa).

7 residues coordinate [4Fe-4S] cluster: Cys-58, Cys-63, Cys-69, Cys-84, Cys-88, Cys-91, and Ser-298. The region spanning 70–287 (FGHGTATFMI…EQEALAMGFR (218 aa)) is the Radical SAM core domain.

This sequence belongs to the radical SAM superfamily. Lipoyl synthase family. The cofactor is [4Fe-4S] cluster.

It localises to the cytoplasm. The catalysed reaction is [[Fe-S] cluster scaffold protein carrying a second [4Fe-4S](2+) cluster] + N(6)-octanoyl-L-lysyl-[protein] + 2 oxidized [2Fe-2S]-[ferredoxin] + 2 S-adenosyl-L-methionine + 4 H(+) = [[Fe-S] cluster scaffold protein] + N(6)-[(R)-dihydrolipoyl]-L-lysyl-[protein] + 4 Fe(3+) + 2 hydrogen sulfide + 2 5'-deoxyadenosine + 2 L-methionine + 2 reduced [2Fe-2S]-[ferredoxin]. The protein operates within protein modification; protein lipoylation via endogenous pathway; protein N(6)-(lipoyl)lysine from octanoyl-[acyl-carrier-protein]: step 2/2. Its function is as follows. Catalyzes the radical-mediated insertion of two sulfur atoms into the C-6 and C-8 positions of the octanoyl moiety bound to the lipoyl domains of lipoate-dependent enzymes, thereby converting the octanoylated domains into lipoylated derivatives. The chain is Lipoyl synthase from Thiobacillus denitrificans (strain ATCC 25259 / T1).